A 473-amino-acid polypeptide reads, in one-letter code: Ribulose bisphosphate carboxylase large chain (473 aa).

Residues 1–2 (MS) constitute a propeptide that is removed on maturation. At proline 3 the chain carries N-acetylproline. An N6,N6,N6-trimethyllysine modification is found at lysine 14. Substrate-binding residues include asparagine 123 and threonine 173. The active-site Proton acceptor is the lysine 175. Position 177 (lysine 177) interacts with substrate. Residues lysine 201, aspartate 203, and glutamate 204 each coordinate Mg(2+). Lysine 201 carries the post-translational modification N6-carboxylysine. Histidine 294 serves as the catalytic Proton acceptor. The substrate site is built by arginine 295, histidine 327, and serine 379.

It belongs to the RuBisCO large chain family. Type I subfamily. Heterohexadecamer of 8 large chains and 8 small chains; disulfide-linked. The disulfide link is formed within the large subunit homodimers. Mg(2+) is required as a cofactor. Post-translationally, the disulfide bond which can form in the large chain dimeric partners within the hexadecamer appears to be associated with oxidative stress and protein turnover.

The protein resides in the plastid. It is found in the chloroplast. The enzyme catalyses 2 (2R)-3-phosphoglycerate + 2 H(+) = D-ribulose 1,5-bisphosphate + CO2 + H2O. The catalysed reaction is D-ribulose 1,5-bisphosphate + O2 = 2-phosphoglycolate + (2R)-3-phosphoglycerate + 2 H(+). Functionally, ruBisCO catalyzes two reactions: the carboxylation of D-ribulose 1,5-bisphosphate, the primary event in carbon dioxide fixation, as well as the oxidative fragmentation of the pentose substrate in the photorespiration process. Both reactions occur simultaneously and in competition at the same active site. The polypeptide is Ribulose bisphosphate carboxylase large chain (Monarda didyma (Scarlet bee-balm)).